We begin with the raw amino-acid sequence, 411 residues long: Arginine deiminase 1 (411 aa).

Cys401 functions as the Amidino-cysteine intermediate in the catalytic mechanism.

Belongs to the arginine deiminase family.

The protein localises to the cytoplasm. The catalysed reaction is L-arginine + H2O = L-citrulline + NH4(+). It participates in amino-acid degradation; L-arginine degradation via ADI pathway; carbamoyl phosphate from L-arginine: step 1/2. The chain is Arginine deiminase 1 (arcA1) from Staphylococcus epidermidis (strain ATCC 12228 / FDA PCI 1200).